A 329-amino-acid chain; its full sequence is 4-hydroxythreonine-4-phosphate dehydrogenase (329 aa).

His-136 and Thr-137 together coordinate substrate. Residues His-166, His-211, and His-266 each contribute to the a divalent metal cation site. Substrate-binding residues include Lys-274, Asn-283, and Arg-292.

This sequence belongs to the PdxA family. In terms of assembly, homodimer. It depends on Zn(2+) as a cofactor. Mg(2+) is required as a cofactor. The cofactor is Co(2+).

The protein resides in the cytoplasm. The catalysed reaction is 4-(phosphooxy)-L-threonine + NAD(+) = 3-amino-2-oxopropyl phosphate + CO2 + NADH. Its pathway is cofactor biosynthesis; pyridoxine 5'-phosphate biosynthesis; pyridoxine 5'-phosphate from D-erythrose 4-phosphate: step 4/5. In terms of biological role, catalyzes the NAD(P)-dependent oxidation of 4-(phosphooxy)-L-threonine (HTP) into 2-amino-3-oxo-4-(phosphooxy)butyric acid which spontaneously decarboxylates to form 3-amino-2-oxopropyl phosphate (AHAP). The chain is 4-hydroxythreonine-4-phosphate dehydrogenase from Neisseria meningitidis serogroup A / serotype 4A (strain DSM 15465 / Z2491).